The chain runs to 231 residues: Transmembrane protein 225 (231 aa).

Over M1–N13 the chain is Cytoplasmic. A helical membrane pass occupies residues I14 to V34. The Extracellular segment spans residues E35–M71. A helical membrane pass occupies residues M72–I92. Residues S93 to H99 are Cytoplasmic-facing. A helical membrane pass occupies residues L100–Y120. Topologically, residues H121–W139 are extracellular. A helical transmembrane segment spans residues I140 to I160. Over Q161 to L231 the chain is Cytoplasmic. The short motif at R225–W229 is the RVxF element.

Interacts (via RVxF motif) with PPP1CC. In terms of tissue distribution, expressed in testis, specifically in spermatocytes and round spermatids.

The protein resides in the cytoplasmic vesicle. The protein localises to the secretory vesicle. It is found in the acrosome membrane. Functionally, probably inhibits protein phosphatase 1 (PP1) in sperm via binding to catalytic subunit PPP1CC. In Rattus norvegicus (Rat), this protein is Transmembrane protein 225 (Tmem225).